The sequence spans 46 residues: Elongation factor Tu (46 aa).

A compositionally biased stretch (basic and acidic residues) spans 1–10 (MAKGKFERSK). The tract at residues 1 to 20 (MAKGKFERSKPHVNVGTIGH) is disordered. Position 19 to 26 (19 to 26 (GHVDHGKT)) interacts with GTP.

It belongs to the GTP-binding elongation factor family. EF-Tu/EF-1A subfamily. In terms of assembly, monomer.

It is found in the cytoplasm. Its function is as follows. This protein promotes the GTP-dependent binding of aminoacyl-tRNA to the A-site of ribosomes during protein biosynthesis. In Eikenella corrodens, this protein is Elongation factor Tu (tufA).